The following is a 378-amino-acid chain: Glutamate 5-kinase (378 aa).

Residue K14 coordinates ATP. Residues S54, D141, and N153 each coordinate substrate. Position 173 to 174 (173 to 174 (SD)) interacts with ATP. The 78-residue stretch at 279 to 356 (AGRLTVDAGA…DEISEILGYD (78 aa)) folds into the PUA domain.

It belongs to the glutamate 5-kinase family.

The protein localises to the cytoplasm. The catalysed reaction is L-glutamate + ATP = L-glutamyl 5-phosphate + ADP. The protein operates within amino-acid biosynthesis; L-proline biosynthesis; L-glutamate 5-semialdehyde from L-glutamate: step 1/2. In terms of biological role, catalyzes the transfer of a phosphate group to glutamate to form L-glutamate 5-phosphate. This is Glutamate 5-kinase from Brucella anthropi (strain ATCC 49188 / DSM 6882 / CCUG 24695 / JCM 21032 / LMG 3331 / NBRC 15819 / NCTC 12168 / Alc 37) (Ochrobactrum anthropi).